Consider the following 133-residue polypeptide: ATP synthase epsilon chain (133 aa).

Belongs to the ATPase epsilon chain family. F-type ATPases have 2 components, CF(1) - the catalytic core - and CF(0) - the membrane proton channel. CF(1) has five subunits: alpha(3), beta(3), gamma(1), delta(1), epsilon(1). CF(0) has three main subunits: a, b and c.

Its subcellular location is the cell membrane. Produces ATP from ADP in the presence of a proton gradient across the membrane. The polypeptide is ATP synthase epsilon chain (Staphylococcus haemolyticus (strain JCSC1435)).